A 172-amino-acid polypeptide reads, in one-letter code: Large ribosomal subunit protein bL9 (172 aa).

It belongs to the bacterial ribosomal protein bL9 family.

Functionally, binds to the 23S rRNA. This Chlamydia caviae (strain ATCC VR-813 / DSM 19441 / 03DC25 / GPIC) (Chlamydophila caviae) protein is Large ribosomal subunit protein bL9.